Here is a 66-residue protein sequence, read N- to C-terminus: Large ribosomal subunit protein bL35 (66 aa).

2 stretches are compositionally biased toward basic residues: residues 1 to 16 and 23 to 45; these read MPKFKTHRASAKRFKK and KRGHAYTSHRFHGKTKKQRRQLR. The interval 1–66 is disordered; sequence MPKFKTHRAS…RIRQMLSQMK (66 aa).

This sequence belongs to the bacterial ribosomal protein bL35 family.

The protein is Large ribosomal subunit protein bL35 of Lacticaseibacillus casei (strain BL23) (Lactobacillus casei).